The chain runs to 399 residues: Zinc finger HIT domain-containing protein 2 (399 aa).

N-acetylmethionine is present on Met1. Zn(2+) contacts are provided by Cys7, Cys10, Cys22, Cys25, Cys30, Cys34, His38, and Cys41. The HIT-type zinc finger occupies 7–41; the sequence is CGFCPTGEAQPARYTCPRCNVPYCSLRCYRAHGSC. Disordered regions lie at residues 71-97 and 141-166; these read LRQQRETEDEPGDAGLRPGPAPGGLSG and EELGDAPSGDAEELEPSPARMPPEPV.

Interacts (via HIT-type zinc finger) with RUVBL2 in the presence of ATP or ADP; shows a stronger interaction in the presence of ADP.

May act as a bridging factor mediating the interaction between the R2TP/Prefoldin-like (R2TP/PFDL) complex and U5 small nuclear ribonucleoprotein (U5 snRNP). Required for the interaction of R2TP complex subunit RPAP3 and prefoldin-like subunit URI1 with U5 snRNP proteins EFTUD2 and PRPF8. May play a role in regulating the composition of the U5 snRNP complex. The sequence is that of Zinc finger HIT domain-containing protein 2 (ZNHIT2) from Bos taurus (Bovine).